The chain runs to 78 residues: Exodeoxyribonuclease 7 small subunit (78 aa).

This sequence belongs to the XseB family. As to quaternary structure, heterooligomer composed of large and small subunits.

It localises to the cytoplasm. The enzyme catalyses Exonucleolytic cleavage in either 5'- to 3'- or 3'- to 5'-direction to yield nucleoside 5'-phosphates.. Functionally, bidirectionally degrades single-stranded DNA into large acid-insoluble oligonucleotides, which are then degraded further into small acid-soluble oligonucleotides. This is Exodeoxyribonuclease 7 small subunit from Oceanobacillus iheyensis (strain DSM 14371 / CIP 107618 / JCM 11309 / KCTC 3954 / HTE831).